The following is a 348-amino-acid chain: MAFFIASSPHLRSKRSTADVMRWVLVCALPGLIAQTYFFGYGTLIQLLLAISVAVALEAGIMLLRKRSPISALRDYSAVVTAWLLAVAIPPLSPWWVVVIGLIFAIVIAKHLYGGLGQNPFNPAMIAYVVLLISFPVQMTSWMAPIKLTAEPSSLVDSFSLIFGGFDSDGLSLQQIRTGIDGITMATPLDAIKTSLKAGHTMSETLTQPQFSGFAGIGWEWVNIAYLLGGLILLKLRIIRWHIPVAMLAGLVFTALLAQLFAPGTTASPMIHLLSGATMLGAFFIATDPVSASTTDKGRLIYGFFIGAMVFLIRSWGGFPDGVAFAVLLANMCVPLIDYYTKPRTYGH.

Topologically, residues 1 to 22 (MAFFIASSPHLRSKRSTADVMR) are cytoplasmic. The next 2 helical transmembrane spans lie at 23 to 43 (WVLV…GYGT) and 44 to 64 (LIQL…IMLL). Residues 65–71 (RKRSPIS) are Cytoplasmic-facing. The helical transmembrane segment at 72–91 (ALRDYSAVVTAWLLAVAIPP) threads the bilayer. At 92-94 (LSP) the chain is on the periplasmic side. A helical membrane pass occupies residues 95–117 (WWVVVIGLIFAIVIAKHLYGGLG). Over 118–125 (QNPFNPAM) the chain is Cytoplasmic. A helical membrane pass occupies residues 126 to 146 (IAYVVLLISFPVQMTSWMAPI). Residues 147 to 213 (KLTAEPSSLV…ETLTQPQFSG (67 aa)) are Periplasmic-facing. T187 is subject to FMN phosphoryl threonine. Residues 214-234 (FAGIGWEWVNIAYLLGGLILL) traverse the membrane as a helical segment. Topologically, residues 235-242 (KLRIIRWH) are cytoplasmic. The helical transmembrane segment at 243 to 263 (IPVAMLAGLVFTALLAQLFAP) threads the bilayer. Topologically, residues 264–265 (GT) are periplasmic. The chain crosses the membrane as a helical span at residues 266–286 (TASPMIHLLSGATMLGAFFIA). Topologically, residues 287–299 (TDPVSASTTDKGR) are cytoplasmic. A run of 2 helical transmembrane segments spans residues 300–320 (LIYG…GGFP) and 321–341 (DGVA…DYYT). Over 342–348 (KPRTYGH) the chain is Cytoplasmic.

Belongs to the NqrB/RnfD family. As to quaternary structure, the complex is composed of six subunits: RnfA, RnfB, RnfC, RnfD, RnfE and RnfG. The cofactor is FMN.

Its subcellular location is the cell inner membrane. Its function is as follows. Part of a membrane-bound complex that couples electron transfer with translocation of ions across the membrane. The sequence is that of Ion-translocating oxidoreductase complex subunit D from Vibrio cholerae serotype O1 (strain ATCC 39541 / Classical Ogawa 395 / O395).